Here is an 861-residue protein sequence, read N- to C-terminus: Translation initiation factor IF-2 (861 aa).

Residues 107–272 (AQKQQDIQRA…QRKKKSKVVQ (166 aa)) are disordered. A compositionally biased stretch (basic and acidic residues) spans 115–128 (RAAEEAAAKERETE). Polar residues-rich tracts occupy residues 148-158 (SVQQEAANMDT) and 169-180 (VDESVSATTAGG). Residues 210–228 (NKEDSEVRREPADAEDLKR) are compositionally biased toward basic and acidic residues. Over residues 260–269 (RARQRKKKSK) the composition is skewed to basic residues. Residues 362 to 531 (SRAPVVSVMG…LLQSEMLELT (170 aa)) form the tr-type G domain. Residues 371–378 (GHVDHGKT) form a G1 region. 371–378 (GHVDHGKT) is a binding site for GTP. The segment at 396-400 (GITQH) is G2. Positions 417–420 (DTPG) are G3. GTP is bound by residues 417-421 (DTPGH) and 471-474 (NKMD). The segment at 471 to 474 (NKMD) is G4. Residues 507–509 (SAH) are G5.

This sequence belongs to the TRAFAC class translation factor GTPase superfamily. Classic translation factor GTPase family. IF-2 subfamily.

It localises to the cytoplasm. Functionally, one of the essential components for the initiation of protein synthesis. Protects formylmethionyl-tRNA from spontaneous hydrolysis and promotes its binding to the 30S ribosomal subunits. Also involved in the hydrolysis of GTP during the formation of the 70S ribosomal complex. This Hahella chejuensis (strain KCTC 2396) protein is Translation initiation factor IF-2.